Here is a 123-residue protein sequence, read N- to C-terminus: Small ribosomal subunit protein uS12 (123 aa).

3-methylthioaspartic acid is present on aspartate 89. A disordered region spans residues 104-123 (SVGVKDRKKSRSKYGAKRPK). Residues 109–123 (DRKKSRSKYGAKRPK) are compositionally biased toward basic residues.

This sequence belongs to the universal ribosomal protein uS12 family. In terms of assembly, part of the 30S ribosomal subunit. Contacts proteins S8 and S17. May interact with IF1 in the 30S initiation complex.

With S4 and S5 plays an important role in translational accuracy. In terms of biological role, interacts with and stabilizes bases of the 16S rRNA that are involved in tRNA selection in the A site and with the mRNA backbone. Located at the interface of the 30S and 50S subunits, it traverses the body of the 30S subunit contacting proteins on the other side and probably holding the rRNA structure together. The combined cluster of proteins S8, S12 and S17 appears to hold together the shoulder and platform of the 30S subunit. The polypeptide is Small ribosomal subunit protein uS12 (Pelobacter propionicus (strain DSM 2379 / NBRC 103807 / OttBd1)).